Here is a 296-residue protein sequence, read N- to C-terminus: 4-diphosphocytidyl-2-C-methyl-D-erythritol kinase (296 aa).

The active site involves K12. Residue 94–104 coordinates ATP; it reads PAQAGMGGGSS. D136 is a catalytic residue.

It belongs to the GHMP kinase family. IspE subfamily.

It carries out the reaction 4-CDP-2-C-methyl-D-erythritol + ATP = 4-CDP-2-C-methyl-D-erythritol 2-phosphate + ADP + H(+). It functions in the pathway isoprenoid biosynthesis; isopentenyl diphosphate biosynthesis via DXP pathway; isopentenyl diphosphate from 1-deoxy-D-xylulose 5-phosphate: step 3/6. Its function is as follows. Catalyzes the phosphorylation of the position 2 hydroxy group of 4-diphosphocytidyl-2C-methyl-D-erythritol. This Variovorax paradoxus (strain S110) protein is 4-diphosphocytidyl-2-C-methyl-D-erythritol kinase.